Reading from the N-terminus, the 157-residue chain is Transcription elongation factor GreA (157 aa).

A coiled-coil region spans residues 14 to 37 (LREELDRLLKLRPKITEAIAEARE).

It belongs to the GreA/GreB family.

Its function is as follows. Necessary for efficient RNA polymerase transcription elongation past template-encoded arresting sites. The arresting sites in DNA have the property of trapping a certain fraction of elongating RNA polymerases that pass through, resulting in locked ternary complexes. Cleavage of the nascent transcript by cleavage factors such as GreA or GreB allows the resumption of elongation from the new 3'terminus. GreA releases sequences of 2 to 3 nucleotides. The polypeptide is Transcription elongation factor GreA (Vibrio cholerae serotype O1 (strain ATCC 39315 / El Tor Inaba N16961)).